Reading from the N-terminus, the 910-residue chain is Myelin regulatory factor-like protein (910 aa).

Residues 142-405 constitute a DNA-binding region (NDT80); the sequence is GCSYPQQPLC…SNPGQFENDS (264 aa). The interval 189–208 is disordered; that stretch reads RSRSSEVQDPDSEGQNRMPT. A Peptidase S74 domain is found at 451 to 559; the sequence is SDSRAKQNIQ…KLTNNLEERI (109 aa). Positions 543–575 form a coiled coil; that stretch reads GAVKQLCKLTNNLEERIEELEIWNRKLARLKRL. A helical membrane pass occupies residues 628-648; that stretch reads LVITLIAVMAFCALTIVALYI. The tract at residues 661-682 is disordered; sequence LPPSNITSSQEPALLPTASSSA. The segment covering 663–682 has biased composition (polar residues); that stretch reads PSNITSSQEPALLPTASSSA.

The protein belongs to the MRF family.

It localises to the membrane. The sequence is that of Myelin regulatory factor-like protein (MYRFL) from Homo sapiens (Human).